A 386-amino-acid chain; its full sequence is Succinate--CoA ligase [ADP-forming] subunit beta (386 aa).

The 236-residue stretch at K9–E244 folds into the ATP-grasp domain. Residues K46, G53–G55, E99, C102, and E107 contribute to the ATP site. Mg(2+)-binding residues include N199 and D213. Substrate contacts are provided by residues N264 and G321–M323.

The protein belongs to the succinate/malate CoA ligase beta subunit family. As to quaternary structure, heterotetramer of two alpha and two beta subunits. Mg(2+) serves as cofactor.

The enzyme catalyses succinate + ATP + CoA = succinyl-CoA + ADP + phosphate. The catalysed reaction is GTP + succinate + CoA = succinyl-CoA + GDP + phosphate. The protein operates within carbohydrate metabolism; tricarboxylic acid cycle; succinate from succinyl-CoA (ligase route): step 1/1. Succinyl-CoA synthetase functions in the citric acid cycle (TCA), coupling the hydrolysis of succinyl-CoA to the synthesis of either ATP or GTP and thus represents the only step of substrate-level phosphorylation in the TCA. The beta subunit provides nucleotide specificity of the enzyme and binds the substrate succinate, while the binding sites for coenzyme A and phosphate are found in the alpha subunit. This chain is Succinate--CoA ligase [ADP-forming] subunit beta, found in Exiguobacterium sibiricum (strain DSM 17290 / CCUG 55495 / CIP 109462 / JCM 13490 / 255-15).